Reading from the N-terminus, the 225-residue chain is MKQSGGTEAQKRRAGKQAADAVEDGMVVGLGTGSTAAASIRELGQRVEEGLDIRGIPTSYQSRQLAREADIPLTTLEEATPDVAIDGADQVAAGDLIKGGGAAHAREKLVDAAADRFLVVADETKLSPTLDIPVPVEVLPDAAPVVQRQVAALGGEPTLRAAERKDGPVVTDNGNLVIDCAFGEIAEPAALAEELSALPGAVEHGLFVGLADEILVGTDDGVDVR.

The tract at residues 1-20 (MKQSGGTEAQKRRAGKQAAD) is disordered. Substrate contacts are provided by residues 32–35 (TGST), 86–89 (DGAD), and 98–101 (KGGG). Residue Glu-107 is the Proton acceptor of the active site. Position 125 (Lys-125) interacts with substrate.

This sequence belongs to the ribose 5-phosphate isomerase family. As to quaternary structure, homodimer.

It catalyses the reaction aldehydo-D-ribose 5-phosphate = D-ribulose 5-phosphate. Its pathway is carbohydrate degradation; pentose phosphate pathway; D-ribose 5-phosphate from D-ribulose 5-phosphate (non-oxidative stage): step 1/1. Its function is as follows. Catalyzes the reversible conversion of ribose-5-phosphate to ribulose 5-phosphate. The polypeptide is Ribose-5-phosphate isomerase A (Natronomonas pharaonis (strain ATCC 35678 / DSM 2160 / CIP 103997 / JCM 8858 / NBRC 14720 / NCIMB 2260 / Gabara) (Halobacterium pharaonis)).